A 483-amino-acid chain; its full sequence is Aspartyl/glutamyl-tRNA(Asn/Gln) amidotransferase subunit B (483 aa).

Belongs to the GatB/GatE family. GatB subfamily. In terms of assembly, heterotrimer of A, B and C subunits.

The enzyme catalyses L-glutamyl-tRNA(Gln) + L-glutamine + ATP + H2O = L-glutaminyl-tRNA(Gln) + L-glutamate + ADP + phosphate + H(+). It catalyses the reaction L-aspartyl-tRNA(Asn) + L-glutamine + ATP + H2O = L-asparaginyl-tRNA(Asn) + L-glutamate + ADP + phosphate + 2 H(+). In terms of biological role, allows the formation of correctly charged Asn-tRNA(Asn) or Gln-tRNA(Gln) through the transamidation of misacylated Asp-tRNA(Asn) or Glu-tRNA(Gln) in organisms which lack either or both of asparaginyl-tRNA or glutaminyl-tRNA synthetases. The reaction takes place in the presence of glutamine and ATP through an activated phospho-Asp-tRNA(Asn) or phospho-Glu-tRNA(Gln). In Rickettsia felis (strain ATCC VR-1525 / URRWXCal2) (Rickettsia azadi), this protein is Aspartyl/glutamyl-tRNA(Asn/Gln) amidotransferase subunit B.